The chain runs to 940 residues: Valine--tRNA ligase (940 aa).

The 'HIGH' region motif lies at proline 47–histidine 57. A 'KMSKS' region motif is present at residues lysine 564–serine 568. Lysine 567 contacts ATP. Residues proline 872 to serine 938 adopt a coiled-coil conformation.

The protein belongs to the class-I aminoacyl-tRNA synthetase family. ValS type 1 subfamily. As to quaternary structure, monomer.

It is found in the cytoplasm. The catalysed reaction is tRNA(Val) + L-valine + ATP = L-valyl-tRNA(Val) + AMP + diphosphate. Its function is as follows. Catalyzes the attachment of valine to tRNA(Val). As ValRS can inadvertently accommodate and process structurally similar amino acids such as threonine, to avoid such errors, it has a 'posttransfer' editing activity that hydrolyzes mischarged Thr-tRNA(Val) in a tRNA-dependent manner. The polypeptide is Valine--tRNA ligase (Chlamydia caviae (strain ATCC VR-813 / DSM 19441 / 03DC25 / GPIC) (Chlamydophila caviae)).